A 252-amino-acid polypeptide reads, in one-letter code: Mitochondrial peculiar membrane protein 1 (252 aa).

The interval 230 to 252 (TTTTSKGSSPQVKHKVVSVDEDN) is disordered.

The protein localises to the mitochondrion membrane. This chain is Mitochondrial peculiar membrane protein 1 (MPM1), found in Saccharomyces cerevisiae (strain ATCC 204508 / S288c) (Baker's yeast).